Here is a 797-residue protein sequence, read N- to C-terminus: Striatin-3 (797 aa).

Met1 bears the N-acetylmethionine mark. 2 stretches are compositionally biased toward gly residues: residues 1–12 (MDELAGGGGGGP) and 33–43 (GGNGAAGGGGP). The interval 1-60 (MDELAGGGGGGPAMASPPRQQQGPGGNMSLSPGGNGAAGGGGPPATEGAGPAAGPELSRP) is disordered. The span at 44 to 55 (PATEGAGPAAGP) shows a compositional bias: low complexity. The segment at 71 to 79 (YIQHEWARF) is caveolin-binding. Positions 77–136 (ARFEMERAHWEVERAELQARIAFLQGERKGQENLKKDLVRRIKMLEYALKQERAKYHKLK) form a coiled coil. Position 150 is a phosphothreonine (Thr150). A calmodulin-binding region spans residues 166 to 183 (QNSQLTWKQGRQLLRQYL). Phosphoserine occurs at positions 202, 214, 229, 257, and 335. Positions 313 to 336 (DGEGAGEARSSGDGTEWDKDDLSP) are disordered. WD repeat units follow at residues 478-517 (SHFD…PAKK), 531-570 (AHIG…VDPY), 584-623 (AHTD…PCIC), 679-718 (QSSN…MIHS), 721-760 (AHLD…CVQE), and 767-796 (KLDE…AKVF).

Belongs to the WD repeat striatin family. Tetramerizes. Part of the core of STRIPAK complexes composed of PP2A catalytic and scaffolding subunits, the striatins (PP2A regulatory subunits), the striatin-associated proteins MOB4, STRIP1 and STRIP2, PDCD10 and members of the STE20 kinases, such as STK24 and STK26. The STRIPAK complex can be extended by adapter proteins such as SLMAP:SIKE1 or CTTNBP2NL. Interacts with CDC42BPB.

It localises to the cytoplasm. The protein localises to the membrane. Its function is as follows. Calmodulin-binding scaffolding protein which is the center of the striatin-interacting phosphatase and kinase (STRIPAK) complexes. STRIPAK complexes have critical roles in protein (de)phosphorylation and are regulators of multiple signaling pathways including Hippo, MAPK, nuclear receptor and cytoskeleton remodeling. Different types of STRIPAK complexes are involved in a variety of biological processes such as cell growth, differentiation, apoptosis, metabolism and immune regulation. This is Striatin-3 (STRN3) from Bos taurus (Bovine).